The chain runs to 308 residues: Oxygen-dependent coproporphyrinogen-III oxidase (308 aa).

S100 contributes to the substrate binding site. H104 and H114 together coordinate a divalent metal cation. Residue H114 is the Proton donor of the active site. 116–118 contacts substrate; it reads NFR. Positions 153 and 183 each coordinate a divalent metal cation. An important for dimerization region spans residues 248–283; sequence YVEFNLVFDRGTIFGLQSGGRTESILSSMPPMATWK. 266–268 provides a ligand contact to substrate; that stretch reads GGR.

It belongs to the aerobic coproporphyrinogen-III oxidase family. Homodimer. A divalent metal cation serves as cofactor.

The protein localises to the cytoplasm. The enzyme catalyses coproporphyrinogen III + O2 + 2 H(+) = protoporphyrinogen IX + 2 CO2 + 2 H2O. It participates in porphyrin-containing compound metabolism; protoporphyrin-IX biosynthesis; protoporphyrinogen-IX from coproporphyrinogen-III (O2 route): step 1/1. In terms of biological role, involved in the heme biosynthesis. Catalyzes the aerobic oxidative decarboxylation of propionate groups of rings A and B of coproporphyrinogen-III to yield the vinyl groups in protoporphyrinogen-IX. This Francisella philomiragia subsp. philomiragia (strain ATCC 25017 / CCUG 19701 / FSC 153 / O#319-036) protein is Oxygen-dependent coproporphyrinogen-III oxidase.